Here is a 418-residue protein sequence, read N- to C-terminus: Serine protease inhibitor A3M (418 aa).

A signal peptide spans Met-1–Cys-20. Asn-104, Asn-184, and Asn-269 each carry an N-linked (GlcNAc...) asparagine glycan. The interval Gly-367–Phe-392 is RCL.

This sequence belongs to the serpin family. In terms of tissue distribution, expressed in liver and testis.

It localises to the secreted. The chain is Serine protease inhibitor A3M (Serpina3m) from Mus musculus (Mouse).